Here is a 120-residue protein sequence, read N- to C-terminus: uncharacterized protein (120 aa).

It is found in the cytoplasm. Its subcellular location is the nucleus. This is an uncharacterized protein from Schizosaccharomyces pombe (strain 972 / ATCC 24843) (Fission yeast).